Consider the following 372-residue polypeptide: Putative KilA-N domain-containing protein L32 (372 aa).

The segment covering 1–12 (MPHKAPKSKLFR) has biased composition (basic residues). The segment at 1–129 (MPHKAPKSKL…SDNDKSKDNF (129 aa)) is disordered. The span at 14 to 36 (RYVEDSDDETRGRSRNRSVEKSR) shows a compositional bias: basic and acidic residues. A compositionally biased stretch (basic residues) spans 37 to 53 (SKSLTRSKSKSPKKSRS). The segment covering 79–120 (EDSEDSEDSESDQDDDKSDNEQSDSELDDSESDDDETDDNES) has biased composition (acidic residues). The region spanning 151 to 255 (KFAIGKFGDF…IKIGEWIEEW (105 aa)) is the KilA-N domain.

The protein is Putative KilA-N domain-containing protein L32 of Acanthamoeba polyphaga (Amoeba).